A 282-amino-acid chain; its full sequence is E3 ubiquitin-protein ligase RNF217 (282 aa).

Positions 1–218 (MSCRVCLEDR…LSIFGCKYRY (218 aa)) are TRIAD supradomain. 10 residues coordinate Zn(2+): C3, C6, C23, C26, C123, C126, H131, C136, C163, and C166. The RING-type 1 zinc finger occupies 3–49 (CRVCLEDRSIKPLPCCKKPVCDECLKRYLSSQVQLGQAEIQCPITEC). An IBR-type zinc finger spans residues 68–136 (IKYKYFLELS…HAPWHEGVNC (69 aa)). An RING-type 2; atypical zinc finger spans residues 163-192 (CPRCKVHIQRTEGCDHMTCSQCNTNFCYRC). The active site involves C176. Residues C181, C184, C189, C192, H205, and C214 each coordinate Zn(2+). A helical transmembrane segment spans residues 243–263 (LLIVLGLVLGALAVVIGLFGL).

It belongs to the RBR family. RNF217 subfamily.

Its subcellular location is the cytoplasm. It localises to the membrane. The enzyme catalyses [E2 ubiquitin-conjugating enzyme]-S-ubiquitinyl-L-cysteine + [acceptor protein]-L-lysine = [E2 ubiquitin-conjugating enzyme]-L-cysteine + [acceptor protein]-N(6)-ubiquitinyl-L-lysine.. It participates in protein modification; protein ubiquitination. In terms of biological role, E3 ubiquitin-protein ligase which accepts ubiquitin from E2 ubiquitin-conjugating enzymes in the form of a thioester and then directly transfers the ubiquitin to targeted substrates. Mediates the degradation of the iron exporter ferroportin/SLC40A1 and thus regulates iron homeostasis. The protein is E3 ubiquitin-protein ligase RNF217 (rnf217) of Xenopus laevis (African clawed frog).